The chain runs to 309 residues: Ornithine carbamoyltransferase (309 aa).

Carbamoyl phosphate is bound by residues 51 to 54, glutamine 78, arginine 102, and 129 to 132; these read STRT and HPVQ. L-ornithine is bound by residues asparagine 159, aspartate 223, and 227-228; that span reads SM. Carbamoyl phosphate is bound by residues 263–264 and arginine 291; that span reads CL.

The protein belongs to the aspartate/ornithine carbamoyltransferase superfamily. OTCase family.

The protein localises to the cytoplasm. The catalysed reaction is carbamoyl phosphate + L-ornithine = L-citrulline + phosphate + H(+). The protein operates within amino-acid biosynthesis; L-arginine biosynthesis; L-arginine from L-ornithine and carbamoyl phosphate: step 1/3. In terms of biological role, reversibly catalyzes the transfer of the carbamoyl group from carbamoyl phosphate (CP) to the N(epsilon) atom of ornithine (ORN) to produce L-citrulline. The sequence is that of Ornithine carbamoyltransferase from Nitratiruptor sp. (strain SB155-2).